The primary structure comprises 886 residues: DNA repair and recombination protein RAD54B (886 aa).

Over residues 1–12 (MRRSAAPSQVQG) the composition is skewed to polar residues. Positions 1-95 (MRRSAAPSQV…ASKEITESKA (95 aa)) are disordered. Ser-14 bears the Phosphoserine mark. Positions 47–62 (AEQSQNDPGVCSSNPC) are enriched in polar residues. Basic and acidic residues-rich tracts occupy residues 67–76 (IPREVGDGTR) and 86–95 (ASKEITESKA). Residues 291-458 (GMRAVGKCGA…FALVDFVNPG (168 aa)) form the Helicase ATP-binding domain. Position 304 to 311 (304 to 311 (DEMGLGKT)) interacts with ATP. The short motif at 409–412 (DEGH) is the DEGH box element. The Helicase C-terminal domain occupies 627–788 (KLLAVIHELR…HIQFSVEELK (162 aa)).

The protein belongs to the SNF2/RAD54 helicase family. In terms of assembly, interacts with RAD51 through the NH2-terminal domain.

It is found in the nucleus. In terms of biological role, involved in DNA repair and mitotic recombination. May play an active role in recombination processes in concert with other members of the RAD52 epistasis group. This Mus musculus (Mouse) protein is DNA repair and recombination protein RAD54B (Rad54b).